We begin with the raw amino-acid sequence, 1266 residues long: MEDFIVISDDSGSESSAGTRSGRARRLRRALSRTPGALPRRTVDFIDLTRETRTRAKDRNGLCVIDLTRSEEENRPIATLDLTLEPVASSQKEPPSLQTCTNLSGKEMIEAQGDRGTQPAAQRVINNDPVDLDLLEENMFEGSRPPTSISQDSVYPPEPNCSSITYKGDLSFLTSLQLSSDVSPFSSTSNNSSSSSNQRTSLPCPQQDVPCQSQGLLCSLQALSYPLRGSPCPPRASSCPPQALSCPPQALSSLSCPSQTVQCQLQALPQPPQEVPCSTQNVPCPQQNIPSTPQDLPWHPRHPLYPSQDTLGLPQDVPGRPQNVSYPQDMTQLQDMPWSLQDMPLSLQDVLQSLQDVPPLLGDVPQSPEVMQLPGYMTQSSRNVIQSSAGVIRSSGGVMQPSGCMMQPSGGVTQSLRSAIQSSGGVMQSSGVTQSLRSVMQSSGGVMQSSGVTQSSGGVTWSLRSVMQSSGCMMQSPGGVMLSAGDMMQSSGGATRSLRSMMQSSGCMMQSPGGVTQSSGSVMQSLRNVIQSSGGVTQSSGGVIQSSSGVPQSLRDRMQSPGSVSQSSGDVIQSPRGASPASGDVIKSQGGMPRSLRDRMQSPGGVPQSSEDVIQSAGGVSPASGDAIQSPGGVSPASGDAMQSSGGVTPSLGDVPQSSGGVSPASGDAMQSPGGVTPSLGDAMQSPGGVSPASGDAMQSPGGVSPSLGDVPQSPGNMLESLGNTPNLSGDVSHVPQELLDLAKGRPKLSLNAVQNRHSPMTISAPSSPSCSANPLSQQSEFSSEKRPWLTVSNSSAREERSLPQSATPGSAQIQGQIAQAGVYNRPCLHRLKYFLRPPVHHLFFQTLIPDKDTRESKGQKLEPIPHRRLRMVTNTIEENFPLGTVQFLMDFVSPQHYPPREIVAHIIQKILLSGSETVDVLKEAYMLLMKIQQLHPANAKTVEWDWKLLTYVMEEEGQTLPGRVLFLRYVVQTLEDDFQQILRRQRQHLQQSIANTVLSCDKQPHNVRDVIKWLVKAVTENALTPPQDETQTSPGPGVLKTSSDHLSPQPNLARNTNQLIVCQLQRMLSIAVEVDRTPTCSSNKIAEMMFGFVLDIPERSQREMFFTTMESHLLRCKVLEIIFLHSCETPTRLPLSLAQALYFLNNSTSLLKCQSDKSQWQTWDELVEHLQFLLSSYQHVLREHLRSSVIDRKDLIIKRIKPKPQQGDDITVVDVEKQIEAFRSRLVHILGEPLVPQLQDKVHLLKLLLFYAADLNPDTEPASER.

The tract at residues 1 to 35 is disordered; it reads MEDFIVISDDSGSESSAGTRSGRARRLRRALSRTP. Basic residues predominate over residues 22 to 31; that stretch reads GRARRLRRAL. An SUMO interaction motif 1 (SIM); mediates the binding to polysumoylated substrates motif is present at residues 45–49; the sequence is FIDLT. The short motif at 64–68 is the SUMO interaction motif 2 (SIM); mediates the binding to polysumoylated substrates element; it reads VIDLT. Composition is skewed to low complexity over residues 183–197 and 532–553; these read SPFS…SSSN and SSGG…VPQS. 4 disordered regions span residues 183–206, 532–732, 756–812, and 1024–1052; these read SPFS…PCPQ, SSGG…SGDV, NRHS…PGSA, and LTPP…PQPN. The span at 560–571 shows a compositional bias: polar residues; sequence SPGSVSQSSGDV. A compositionally biased stretch (low complexity) spans 764 to 777; sequence SAPSSPSCSANPLS. The interval 779-1266 is interaction with SLF2; sequence QSEFSSEKRP…NPDTEPASER (488 aa). The required for inhibition of CAPN3 protease activity stretch occupies residues 857–1266; it reads SKGQKLEPIP…NPDTEPASER (410 aa). Residues 865 to 1200 are NSE5-like domain; it reads IPHRRLRMVT…IDRKDLIIKR (336 aa).

In terms of assembly, forms a heterodimer with SLF2. Interacts (via SIM domains) with SUMO1 and SUMO2. Interacts with CAPN3 and CTBP1. Interacts with SMC6 and ZNF451.

It is found in the nucleus. It localises to the PML body. In terms of biological role, inhibits the protease activity of CAPN3. May play a role in SMC5-SMC6 complex recruitment for viral restriction. Forms a complex with SLF2 and this complex is required to recruit SMC5-SMC6 complex to PML nuclear bodies and sites of viral replication. This chain is SUMO-interacting motif-containing protein 1 (Simc1), found in Rattus norvegicus (Rat).